Consider the following 302-residue polypeptide: MNKLTAQNLLKKSRFLKYSLLTSISVGAVMAIPVERIAMGMDQEAFCAELSKKLSLEFSQSYEDTISTTQEKNNLSNNGPSNKSDMAEELANVTTKSLYKVRKMQAPEFKISENKFLNNLDSQTISKELDPNTYTTESISQKPEIILTASSTTVSTDSNSFVTVSTASSLKPVTSYQPTPDFKPNYSLGFNTPINTNLKIVRKLSFSSEQPQIVQHSKSMIPLMPTAPVVLPKSSIEIEPEMVSNIPRVDDTISIKSSEVREDIKGTKDQKTLVDQFNSSIGIWSKKTGKNKYDLNKDSSQK.

An N-terminal signal peptide occupies residues 1–28 (MNKLTAQNLLKKSRFLKYSLLTSISVGA).

This is an uncharacterized protein from Rickettsia prowazekii (strain Madrid E).